Here is a 196-residue protein sequence, read N- to C-terminus: Putative adenylate kinase (196 aa).

5 residues coordinate ATP: Gly-10, Gly-12, Lys-13, Thr-14, and Ser-15. An NMP region spans residues 30–53 (YLNDLIKEEHLYSEVDEERDSVIA). The interval 118-128 (KRGYSEEKINE) is LID. Arg-119 provides a ligand contact to ATP.

It belongs to the adenylate kinase family. AK6 subfamily. In terms of assembly, interacts with uS11. Not a structural component of 40S pre-ribosomes, but transiently interacts with them by binding to uS11.

It catalyses the reaction AMP + ATP = 2 ADP. The enzyme catalyses ATP + H2O = ADP + phosphate + H(+). Functionally, broad-specificity nucleoside monophosphate (NMP) kinase that catalyzes the reversible transfer of the terminal phosphate group between nucleoside triphosphates and monophosphates. Also has ATPase activity. Involved in the late maturation steps of the 30S ribosomal particles, specifically 16S rRNA maturation. While NMP activity is not required for ribosome maturation, ATPase activity is. Associates transiently with small ribosomal subunit protein uS11. ATP hydrolysis breaks the interaction with uS11. May temporarily remove uS11 from the ribosome to enable a conformational change of the ribosomal RNA that is needed for the final maturation step of the small ribosomal subunit. In Methanosarcina mazei (strain ATCC BAA-159 / DSM 3647 / Goe1 / Go1 / JCM 11833 / OCM 88) (Methanosarcina frisia), this protein is Putative adenylate kinase.